Consider the following 445-residue polypeptide: Phosphoglucosamine mutase (445 aa).

The active-site Phosphoserine intermediate is Ser-99. Residues Ser-99, Asp-242, Asp-244, and Asp-246 each coordinate Mg(2+). At Ser-99 the chain carries Phosphoserine.

This sequence belongs to the phosphohexose mutase family. Mg(2+) serves as cofactor. Post-translationally, activated by phosphorylation.

It carries out the reaction alpha-D-glucosamine 1-phosphate = D-glucosamine 6-phosphate. Catalyzes the conversion of glucosamine-6-phosphate to glucosamine-1-phosphate. This is Phosphoglucosamine mutase from Helicobacter pylori (strain HPAG1).